We begin with the raw amino-acid sequence, 216 residues long: MASQERVDSVTKGTGFRRCRKQAGYTPGTCELLRVMMKESKLTNFQQRHIMDTMKRGAPLPLQCNPTSSLRGSPSKKAASAIYLPPILATHSHLRPASLCQANGAYSREQFKPQATRDLEKEKRRLQNIFATGKDKEERKKVPHVRQEDPAPELDRFDELVKEIQDRKEFLAAMEALGQGRQYRSIILAEISQKLREMEDIDRRRSKELRKALATT.

The protein belongs to the UPF0193 (EVG1) family.

The protein is UPF0193 protein EVG1 homolog of Mus musculus (Mouse).